We begin with the raw amino-acid sequence, 767 residues long: Cation/H(+) antiporter 27 (767 aa).

A run of 11 helical transmembrane segments spans residues 39 to 59 (LPLL…FQFL), 63 to 83 (FGKF…PSVI), 99 to 119 (VYII…ITTC), 135 to 155 (INGI…AILI), 173 to 193 (HVAI…LSSL), 205 to 225 (LASM…NIAI), 242 to 262 (VLQM…MLWM), 280 to 300 (ICVL…PYFF), 323 to 343 (IGCF…GLNI), 371 to 391 (IALP…VGFI), and 415 to 435 (KSFG…IVIV).

It belongs to the monovalent cation:proton antiporter 2 (CPA2) transporter (TC 2.A.37) family. CHX (TC 2.A.37.4) subfamily. As to expression, specifically expressed in pollen.

Its subcellular location is the membrane. Its function is as follows. May operate as a cation/H(+) antiporter. This Arabidopsis thaliana (Mouse-ear cress) protein is Cation/H(+) antiporter 27 (CHX27).